The sequence spans 78 residues: UPF0291 protein MCCL_0996 (78 aa).

This sequence belongs to the UPF0291 family.

It is found in the cytoplasm. The polypeptide is UPF0291 protein MCCL_0996 (Macrococcus caseolyticus (strain JCSC5402) (Macrococcoides caseolyticum)).